The chain runs to 375 residues: Chaperone protein DnaJ (375 aa).

The 66-residue stretch at 5-70 folds into the J domain; the sequence is DYYEVLGVAR…NKRRAYDAHG (66 aa). The CR-type zinc-finger motif lies at 131–208; it reads GIERRIEIPT…CHGAGRVEED (78 aa). Zn(2+)-binding residues include C144, C147, C160, C163, C182, C185, C196, and C199. CXXCXGXG motif repeat units follow at residues 144–151, 160–167, 182–189, and 196–203; these read CAPCHGSG, CGTCHGRG, CPHCDGRG, and CKTCHGAG.

It belongs to the DnaJ family. As to quaternary structure, homodimer. Requires Zn(2+) as cofactor.

The protein localises to the cytoplasm. Participates actively in the response to hyperosmotic and heat shock by preventing the aggregation of stress-denatured proteins and by disaggregating proteins, also in an autonomous, DnaK-independent fashion. Unfolded proteins bind initially to DnaJ; upon interaction with the DnaJ-bound protein, DnaK hydrolyzes its bound ATP, resulting in the formation of a stable complex. GrpE releases ADP from DnaK; ATP binding to DnaK triggers the release of the substrate protein, thus completing the reaction cycle. Several rounds of ATP-dependent interactions between DnaJ, DnaK and GrpE are required for fully efficient folding. Also involved, together with DnaK and GrpE, in the DNA replication of plasmids through activation of initiation proteins. In Xanthomonas axonopodis pv. citri (strain 306), this protein is Chaperone protein DnaJ.